Reading from the N-terminus, the 238-residue chain is DNA repair protein RecO (238 aa).

The protein belongs to the RecO family.

In terms of biological role, involved in DNA repair and RecF pathway recombination. The protein is DNA repair protein RecO of Aliivibrio salmonicida (strain LFI1238) (Vibrio salmonicida (strain LFI1238)).